The primary structure comprises 412 residues: MVMRSWPAPTVVALPDHGGPLSVHDTVTGSRRTITPGATARMYVCGITPYDAAHLGHAFTYLTFDLVNRVWRDAGHTVDYVQNITDIDDPLLERAAATGQDWQELAAREIQVFREDMAALRILPPRAFLGVVESMDLIADFVARLRAQGVTYEVDGDIYFSAADAPGFGSLSQLDRTAMLELFAERGGDPGRAGKKDPLDWLLWRAERPGEPAWDTPLGRGRPGWHVECSAISVHELGMGFDLNGGGDDLIFPHHEMGAAEACCATGSRPQARHYLHVAMVGLDGEKMSKSRGNLVFVSQLRKAGTDPMAIRLALLAHHYRTAWEWTDADLRTAEQRLERWRAAAAVENAPDARPLLARVRSALADDLDTATALAAVDEWADAALSGSGDDPDAPALMRTTVDTLLGVALDR.

Cysteine 45 provides a ligand contact to Zn(2+). Residues cysteine 45–threonine 48, threonine 60, and asparagine 83–threonine 85 each bind L-cysteinyl-5'-AMP. Positions isoleucine 47–histidine 57 match the 'HIGH' region motif. The 'ERGGDP' region signature appears at glutamate 185 to proline 190. Position 225 (tryptophan 225) interacts with L-cysteinyl-5'-AMP. Zn(2+) is bound at residue cysteine 229. Residue glycine 247–aspartate 249 participates in L-cysteinyl-5'-AMP binding. Residue histidine 254 coordinates Zn(2+). L-cysteinyl-5'-AMP is bound at residue valine 281. The short motif at lysine 287 to serine 291 is the 'KMSKS' region element.

This sequence belongs to the class-I aminoacyl-tRNA synthetase family. MshC subfamily. Monomer. Zn(2+) serves as cofactor.

The catalysed reaction is 1D-myo-inositol 2-amino-2-deoxy-alpha-D-glucopyranoside + L-cysteine + ATP = 1D-myo-inositol 2-(L-cysteinylamino)-2-deoxy-alpha-D-glucopyranoside + AMP + diphosphate + H(+). Its function is as follows. Catalyzes the ATP-dependent condensation of GlcN-Ins and L-cysteine to form L-Cys-GlcN-Ins. The protein is L-cysteine:1D-myo-inositol 2-amino-2-deoxy-alpha-D-glucopyranoside ligase of Thermobifida fusca (strain YX).